The chain runs to 447 residues: Enolase (447 aa).

Q168 serves as a coordination point for (2R)-2-phosphoglycerate. E210 functions as the Proton donor in the catalytic mechanism. D247, E292, and D319 together coordinate Mg(2+). Residues K344, R373, S374, and K395 each contribute to the (2R)-2-phosphoglycerate site. K344 (proton acceptor) is an active-site residue.

The protein belongs to the enolase family. As to quaternary structure, component of the RNA degradosome, a multiprotein complex involved in RNA processing and mRNA degradation. Mg(2+) serves as cofactor.

It localises to the cytoplasm. It is found in the secreted. The protein localises to the cell surface. It catalyses the reaction (2R)-2-phosphoglycerate = phosphoenolpyruvate + H2O. The protein operates within carbohydrate degradation; glycolysis; pyruvate from D-glyceraldehyde 3-phosphate: step 4/5. Its function is as follows. Catalyzes the reversible conversion of 2-phosphoglycerate (2-PG) into phosphoenolpyruvate (PEP). It is essential for the degradation of carbohydrates via glycolysis. In Blochmanniella floridana, this protein is Enolase.